The primary structure comprises 985 residues: Protein psiQ (985 aa).

The signal sequence occupies residues 1–20 (MMKYIYILLIFSLLFLKINS). Residues 102–247 (QSTTNPNVYA…YDECGVCQGD (146 aa)) form the PA14 domain. N-linked (GlcNAc...) asparagine glycosylation is found at Asn-127, Asn-309, Asn-424, Asn-491, Asn-517, Asn-527, Asn-592, Asn-620, Asn-649, Asn-696, Asn-735, Asn-767, Asn-786, Asn-824, and Asn-842.

It belongs to the prespore-cell-inducing factor family.

It is found in the secreted. In Dictyostelium discoideum (Social amoeba), this protein is Protein psiQ (psiQ).